We begin with the raw amino-acid sequence, 165 residues long: 6,7-dimethyl-8-ribityllumazine synthase (165 aa).

5-amino-6-(D-ribitylamino)uracil is bound by residues Phe24, 62-64 (AFE), and 86-88 (AVI). Residue 91-92 (DT) participates in (2S)-2-hydroxy-3-oxobutyl phosphate binding. His94 functions as the Proton donor in the catalytic mechanism. Phe119 contacts 5-amino-6-(D-ribitylamino)uracil. (2S)-2-hydroxy-3-oxobutyl phosphate is bound at residue Arg133.

The protein belongs to the DMRL synthase family.

It catalyses the reaction (2S)-2-hydroxy-3-oxobutyl phosphate + 5-amino-6-(D-ribitylamino)uracil = 6,7-dimethyl-8-(1-D-ribityl)lumazine + phosphate + 2 H2O + H(+). It functions in the pathway cofactor biosynthesis; riboflavin biosynthesis; riboflavin from 2-hydroxy-3-oxobutyl phosphate and 5-amino-6-(D-ribitylamino)uracil: step 1/2. In terms of biological role, catalyzes the formation of 6,7-dimethyl-8-ribityllumazine by condensation of 5-amino-6-(D-ribitylamino)uracil with 3,4-dihydroxy-2-butanone 4-phosphate. This is the penultimate step in the biosynthesis of riboflavin. The chain is 6,7-dimethyl-8-ribityllumazine synthase from Prochlorococcus marinus (strain MIT 9313).